Here is a 258-residue protein sequence, read N- to C-terminus: Ribonuclease PH (258 aa).

Phosphate is bound by residues Arg86 and 124 to 126 (GTR).

It belongs to the RNase PH family. In terms of assembly, homohexameric ring arranged as a trimer of dimers.

The catalysed reaction is tRNA(n+1) + phosphate = tRNA(n) + a ribonucleoside 5'-diphosphate. Functionally, phosphorolytic 3'-5' exoribonuclease that plays an important role in tRNA 3'-end maturation. Removes nucleotide residues following the 3'-CCA terminus of tRNAs; can also add nucleotides to the ends of RNA molecules by using nucleoside diphosphates as substrates, but this may not be physiologically important. Probably plays a role in initiation of 16S rRNA degradation (leading to ribosome degradation) during starvation. This chain is Ribonuclease PH, found in Caldicellulosiruptor saccharolyticus (strain ATCC 43494 / DSM 8903 / Tp8T 6331).